We begin with the raw amino-acid sequence, 224 residues long: Deoxyribose-phosphate aldolase (224 aa).

D92 functions as the Proton donor/acceptor in the catalytic mechanism. K155 serves as the catalytic Schiff-base intermediate with acetaldehyde. K184 acts as the Proton donor/acceptor in catalysis.

Belongs to the DeoC/FbaB aldolase family. DeoC type 1 subfamily.

The protein localises to the cytoplasm. It catalyses the reaction 2-deoxy-D-ribose 5-phosphate = D-glyceraldehyde 3-phosphate + acetaldehyde. Its pathway is carbohydrate degradation; 2-deoxy-D-ribose 1-phosphate degradation; D-glyceraldehyde 3-phosphate and acetaldehyde from 2-deoxy-alpha-D-ribose 1-phosphate: step 2/2. Its function is as follows. Catalyzes a reversible aldol reaction between acetaldehyde and D-glyceraldehyde 3-phosphate to generate 2-deoxy-D-ribose 5-phosphate. This is Deoxyribose-phosphate aldolase from Shouchella clausii (strain KSM-K16) (Alkalihalobacillus clausii).